We begin with the raw amino-acid sequence, 118 residues long: DNA polymerase epsilon subunit 4 (118 aa).

Low complexity-rich tracts occupy residues 1–11 (MAAAAAAGSGT) and 19–35 (GGEA…SAPG). Positions 1-37 (MAAAAAAGSGTPREEEAPGGEAAASQAQAPTSAPGGV) are disordered. Position 2 is an N-acetylalanine (Ala2). Thr11 is modified (phosphothreonine). Ser25 is subject to Phosphoserine.

Component of the DNA polymerase epsilon complex consisting of four subunits: the catalytic subunit POLE and the accessory subunits POLE2, POLE3 and POLE4. Interaction with POLE3 is a prerequisite for further binding with POLE and POLE2.

Its subcellular location is the nucleus. In terms of biological role, accessory component of the DNA polymerase epsilon complex. Participates in DNA repair and in chromosomal DNA replication. This Mus musculus (Mouse) protein is DNA polymerase epsilon subunit 4 (Pole4).